The following is a 356-amino-acid chain: Methylthioribose-1-phosphate isomerase (356 aa).

D234 functions as the Proton donor in the catalytic mechanism.

This sequence belongs to the eIF-2B alpha/beta/delta subunits family. MtnA subfamily.

The protein resides in the cytoplasm. It is found in the nucleus. It catalyses the reaction 5-(methylsulfanyl)-alpha-D-ribose 1-phosphate = 5-(methylsulfanyl)-D-ribulose 1-phosphate. The protein operates within amino-acid biosynthesis; L-methionine biosynthesis via salvage pathway; L-methionine from S-methyl-5-thio-alpha-D-ribose 1-phosphate: step 1/6. Its function is as follows. Catalyzes the interconversion of methylthioribose-1-phosphate (MTR-1-P) into methylthioribulose-1-phosphate (MTRu-1-P). The protein is Methylthioribose-1-phosphate isomerase (mri1) of Schizosaccharomyces japonicus (strain yFS275 / FY16936) (Fission yeast).